Here is a 107-residue protein sequence, read N- to C-terminus: uncharacterized protein (107 aa).

2 helical membrane passes run 5 to 25 (WTII…VINV) and 42 to 62 (ILVI…VGIF). Residues 82–92 (IHKQEDTHLAD) are compositionally biased toward basic and acidic residues. The interval 82–107 (IHKQEDTHLADQTDTQDASAMIEKKD) is disordered.

Its subcellular location is the cell membrane. This is an uncharacterized protein from Bacillus subtilis (strain 168).